We begin with the raw amino-acid sequence, 1589 residues long: MSATSWFLVSSSGARHRLPRELIFVGREECELMLQSRSVDKQHAVINYDQDRDEHWVKDLGSLNGTFVNDMRIPDQKYVTLKLNDVIRFGYDSNMYVLERVQHRVPEEALKHEKYTSQLQVSVKGLAPKRSEALPEHTPYCEASNPRPEKGDRRPGTEAASYRTPLYGQPSWWGEDDGSTLPDAQRQGEPYPERPKGPVQQDGELHGFRAPAEPQGCSFRREPSYFEIPTKETPQPSQPPEVPAHEMPTKDAEAGGGGAAPVVQSHASFTIEFDDCSPGKMKIKDHITKFSLRQRRPPGKEATPGEMVSAETKVADWLVQNDPSLLHRVGPGDDRHSTKSDLPVHTRTLKGHKHEDGTQSDSEDPLAKAASAAGVPLEASGEQVRLQRQIKRDPQELLHNQQAFVIEFFDEDTPRKKRSQSFTHSPSGDPKADKRRGPTPADRDRPSVPAPVQAGGRSSGPQRAGSLKREKTEERLGSPSPASRTPARPFGSVGRRSRLAQDFMAQCLRESSPAARPSPEKVPPVLPAPLTPHGTSPVGPPTPPPAPTDPQLTKARKQEEDDSLSDAGTYTIETEAQDTEVEEARKMIDQVFGVLESPELSRASSATFRPVIRGDRDESDDGGVAQRMALLQEFASRPLGAAPQAEHQGLPVPGSPGGQKWVSRWASLADSYSDPGLTEDGLGRRGGEPEGSLPVRMRRRLPQLPSERADSPAGPESSRRSGPGPPELDSEQPSRLFGQEELDPDSLSDASGSDGGRGPEPGVEPQDSRRRSPQEGPTWSRGRRSPRAPGEPTPASFFIGDQNGDAVLSRKPLAAPGDGEGLGQTAQPSPPARDGVYVSANGRMVIQLRPGRSPEPDGPAPAFLRQESFTKEPASGPPAPGKPPHISSHPLLQDLAATRAARMDFHSQDTHLILKETETALAALEARLLSNSVDAECEGGSTPRPPEDALSGDSDVDTASTVSLRSGKSGPSPTTPQPLRAQKEMSPSPPAAQDPGGTALVSAREQSSERQHHPLGPTDMGRGEPVRRSAIRRGHRPRGSLDWPSEERGPVLAHLPSSDVMASNHETPEATGAGRLGSRRKPAAPPPSPAAREEQSRSSASSQKGPQALTRSNSLSTPRPTRASRLRRARLGDASDTEAADGERGSLGNPEPVGRPAAEQAKKLSRLDILAMPRKRAGSFTGTSDPEAAPARTSFSGRSVELCCASRKPTMAEARAVSRKAANTATTTGPRQPFSRARSGSARYTSNTRRRQQGSDYTSTSEEEYGSRHGSPKHTRSHTSTATQTPRAGSSSRARSRAPGPRDTDDDEEEPDPYGFIVQTAEIAEIARLSQTLVKDVAILAQEIHDVAGDGDTLGSSEPAHSASLSNMPSTPASTISAREELVQRIPEASLNFQKVPPGSLNSRDFDQNMNDSCEDALANKTRPRNREEVIFDNLMLNPVSQLSQAIRENTEHLAEKMKILFQNTGRAWEDLEARINAENEVPILKTSNKEISSILKELRRVQKQLEVINAIVDPSGSLDLLTGNRSLASSAQPGLGKGRVAAQSPPSPASAEALLPALPLRNFPQRASCGPPSLPDPTFLPDAERFLI.

Residues 23–73 enclose the FHA domain; sequence IFVGREECELMLQSRSVDKQHAVINYDQDRDEHWVKDLGSLNGTFVNDMRI. 4 disordered regions span residues 130–261, 287–309, 325–388, and 409–583; these read RSEA…GAAP, ITKF…EMVS, LLHR…RLQR, and FDED…EVEE. Basic and acidic residues-rich tracts occupy residues 147–156 and 243–253; these read RPEKGDRRPG and PAHEMPTKDAE. Residues 330 to 344 are compositionally biased toward basic and acidic residues; that stretch reads GPGDDRHSTKSDLPV. 2 positions are modified to phosphoserine: Ser360 and Ser421. Composition is skewed to basic and acidic residues over residues 430–446 and 467–476; these read PKAD…RDRP and LKREKTEERL. The segment covering 478–489 has biased composition (low complexity); the sequence is SPSPASRTPARP. Phosphoserine is present on residues Ser480 and Ser492. Positions 520 to 530 are enriched in pro residues; sequence EKVPPVLPAPL. The residue at position 536 (Ser536) is a Phosphoserine. Positions 538 to 548 are enriched in pro residues; the sequence is VGPPTPPPAPT. Phosphothreonine is present on Thr542. Phosphoserine is present on residues Ser597, Ser619, Ser655, Ser711, Ser721, Ser746, Ser748, Ser751, Ser753, Ser772, Ser829, Ser853, Ser954, Ser972, Ser986, and Ser988. Disordered regions lie at residues 598 to 895, 934 to 1316, 1350 to 1374, and 1532 to 1552; these read PELS…LQDL, DAEC…PYGF, DGDT…TPAS, and AQPG…PASA. A compositionally biased stretch (low complexity) spans 711 to 722; sequence SPAGPESSRRSG. The span at 957-972 shows a compositional bias: polar residues; that stretch reads DTASTVSLRSGKSGPS. Residues 1029-1038 are compositionally biased toward basic residues; the sequence is SAIRRGHRPR. Phosphoserine is present on residues Ser1135, Ser1179, and Ser1199. Residues 1221-1230 show a composition bias toward polar residues; the sequence is AANTATTTGP. Residues 1286–1301 show a composition bias toward low complexity; the sequence is PRAGSSSRARSRAPGP. Phosphothreonine is present on Thr1304. 2 positions are modified to phosphoserine: Ser1356 and Ser1362. Polar residues predominate over residues 1363–1374; it reads ASLSNMPSTPAS. Residues 1542 to 1552 are compositionally biased toward low complexity; it reads AAQSPPSPASA. Phosphoserine is present on residues Ser1545 and Ser1548.

It belongs to the CEP170 family.

The protein localises to the cytoplasm. The protein resides in the cytoskeleton. Functionally, plays a role in microtubule organization. The chain is Centrosomal protein of 170 kDa protein B (CEP170B) from Homo sapiens (Human).